The primary structure comprises 318 residues: Porphobilinogen deaminase (318 aa).

S-(dipyrrolylmethanemethyl)cysteine is present on Cys241.

Belongs to the HMBS family. As to quaternary structure, monomer. It depends on dipyrromethane as a cofactor.

It catalyses the reaction 4 porphobilinogen + H2O = hydroxymethylbilane + 4 NH4(+). The protein operates within porphyrin-containing compound metabolism; protoporphyrin-IX biosynthesis; coproporphyrinogen-III from 5-aminolevulinate: step 2/4. Its function is as follows. Tetrapolymerization of the monopyrrole PBG into the hydroxymethylbilane pre-uroporphyrinogen in several discrete steps. The protein is Porphobilinogen deaminase of Geobacter sulfurreducens (strain ATCC 51573 / DSM 12127 / PCA).